A 399-amino-acid chain; its full sequence is Bombesin receptor subtype-3 (399 aa).

Over 1–41 (MAQRQPHSPNQTLISITNDTESSSSVVSNDNTNKGWSGDNS) the chain is Extracellular. Asparagine 10 and asparagine 18 each carry an N-linked (GlcNAc...) asparagine glycan. A helical membrane pass occupies residues 42 to 63 (PGIEALCAIYITYAVIISVGIL). Residues 64–82 (GNAILIKVFFKTKSMQTVP) lie on the Cytoplasmic side of the membrane. Residues 83 to 103 (NIFITSLAFGDLLLLLTCVPV) form a helical membrane-spanning segment. Over 104-121 (DATHYLAEGWLFGRIGCK) the chain is Extracellular. Cysteine 120 and cysteine 203 form a disulfide bridge. Residues 122-143 (VLSFIRLTSVGVSVFTLTILSA) form a helical membrane-spanning segment. Residues 144–163 (DRYKAVVKPLERQPSNAILK) lie on the Cytoplasmic side of the membrane. Residues 164–184 (TCVKAGCVWIVSMIFALPEAI) form a helical membrane-spanning segment. The Extracellular portion of the chain corresponds to 185-220 (FSNVYTFRDPNKNMTFESCTSYPVSKKLLQEIHSLL). Residues 221 to 241 (CFLVFYIIPLSIISVYYSLIA) form a helical membrane-spanning segment. Topologically, residues 242 to 272 (RTLYKSTLNIPTEEQSHARKQIESRKRIART) are cytoplasmic. A helical membrane pass occupies residues 273–293 (VLVLVALFALCWLPNHLLYLY). Over 294–313 (HSFTSQTYVDPSAMHFIFTI) the chain is Extracellular. Residues 314–333 (FSRVLAFSNSCVNPFALYWL) traverse the membrane as a helical segment. The Cytoplasmic segment spans residues 334–399 (SKSFQKHFKA…CSVKQAEDRF (66 aa)). The S-palmitoyl cysteine moiety is linked to residue cysteine 347.

This sequence belongs to the G-protein coupled receptor 1 family. Interacts with C6orf89. In germ cells in testis. Lung carcinoma cells.

Its subcellular location is the cell membrane. Role in sperm cell division, maturation, or function. This receptor mediates its action by association with G proteins that activate a phosphatidylinositol-calcium second messenger system. In Homo sapiens (Human), this protein is Bombesin receptor subtype-3 (BRS3).